The sequence spans 273 residues: Putative phosphoenolpyruvate synthase regulatory protein (273 aa).

Position 153–160 (153–160 (AVSRAGKT)) interacts with ADP.

Belongs to the pyruvate, phosphate/water dikinase regulatory protein family. PSRP subfamily.

It catalyses the reaction [pyruvate, water dikinase] + ADP = [pyruvate, water dikinase]-phosphate + AMP + H(+). It carries out the reaction [pyruvate, water dikinase]-phosphate + phosphate + H(+) = [pyruvate, water dikinase] + diphosphate. Bifunctional serine/threonine kinase and phosphorylase involved in the regulation of the phosphoenolpyruvate synthase (PEPS) by catalyzing its phosphorylation/dephosphorylation. The sequence is that of Putative phosphoenolpyruvate synthase regulatory protein from Xanthomonas axonopodis pv. citri (strain 306).